Consider the following 43-residue polypeptide: Protein PsbN (43 aa).

The chain crosses the membrane as a helical span at residues 5-25 (TVLSIFISSLLLGITIYSIYI).

Belongs to the PsbN family.

It is found in the plastid. The protein resides in the chloroplast thylakoid membrane. May play a role in photosystem I and II biogenesis. In Gracilaria tenuistipitata var. liui (Red alga), this protein is Protein PsbN.